A 500-amino-acid chain; its full sequence is Carnosic acid synthase (500 aa).

Residues 4–24 (LILLSLAFLASCVVAYSRRRP) traverse the membrane as a helical segment. Residue C443 coordinates heme.

The protein belongs to the cytochrome P450 family. Heme is required as a cofactor. In terms of tissue distribution, expressed in leaf glandular trichomes.

It is found in the membrane. The enzyme catalyses 11-hydroxyferruginol + 3 reduced [NADPH--hemoprotein reductase] + 3 O2 = carnosate + 3 oxidized [NADPH--hemoprotein reductase] + 4 H2O + 4 H(+). It carries out the reaction miltiradiene + 2 reduced [NADPH--hemoprotein reductase] + 2 O2 = miltiradien-20-al + 2 oxidized [NADPH--hemoprotein reductase] + 3 H2O + 2 H(+). The catalysed reaction is ferruginol + 3 reduced [NADPH--hemoprotein reductase] + 3 O2 = pisiferate + 3 oxidized [NADPH--hemoprotein reductase] + 4 H2O + 4 H(+). It participates in secondary metabolite biosynthesis; terpenoid biosynthesis. In terms of biological role, monooxygenase involved in the biosynthesis of carnosate, a potent antioxidant labdane-related diterpene natural product. Catalyzes the oxidation of 11-hydroxyferruginol to produce carnosate. Mediates the conversion of miltiradien into miltiradien-20-al. Also involved in the production of pisiferic acid and derivative products from ferruginol. The chain is Carnosic acid synthase from Salvia pomifera (Apple sage).